A 514-amino-acid chain; its full sequence is Sugar transport protein 3 (514 aa).

Residues 1-19 are Cytoplasmic-facing; the sequence is MVAEEARKEAMAKSVSGGK. The next 12 helical transmembrane spans lie at 20–40, 87–107, 124–144, 147–167, 174–194, 207–227, 289–309, 327–347, 356–376, 392–412, 430–450, and 456–476; these read ITYF…IFGY, LLTS…LLAS, VSFL…MLII, LLLG…LSEM, GAIS…ANVI, ISLA…LFLP, LVMA…VVAF, MSTL…MLVV, FLIG…IVMV, VVVL…PLGW, VTVA…PPML, and GIFF…QLFL. Residues 477 to 514 lie on the Cytoplasmic side of the membrane; the sequence is PETKNVPIEKVVGLWEKHWFWRRMTSKRDIQETTILSH.

The protein belongs to the major facilitator superfamily. Sugar transporter (TC 2.A.1.1) family.

It is found in the membrane. Its function is as follows. Mediates an active uptake of hexoses, probably by sugar/hydrogen symport. The sequence is that of Sugar transport protein 3 (STP3) from Arabidopsis thaliana (Mouse-ear cress).